The primary structure comprises 314 residues: Probable cell division protein WhiA (314 aa).

The H-T-H motif DNA-binding region spans 274-308 (SLKELGEMVSTGPISKSGVNHRLRKLNDLADKIRN).

It belongs to the WhiA family.

Involved in cell division and chromosome segregation. This chain is Probable cell division protein WhiA, found in Staphylococcus aureus (strain USA300).